Here is a 97-residue protein sequence, read N- to C-terminus: uncharacterized protein (97 aa).

This sequence to M.thermoautotrophicum MTH1236.

This is an uncharacterized protein from Methanocaldococcus jannaschii (strain ATCC 43067 / DSM 2661 / JAL-1 / JCM 10045 / NBRC 100440) (Methanococcus jannaschii).